The primary structure comprises 490 residues: MDPVLVLVLTLSCLLLFSVWRQSSGRGRLPPGPTPLPLIGNILQIDIKDISKSLANFSKVYGPVFTLYFGTKPTVVVHGYEAVKEALEDLGEEFSGRGNFPIVERMNSGLGIIFSNGTKWKELRRFSLMTLRNFGMGKRSIEDCIQEEARCLVEELRKTNGSPCDPTFFLSCAPSNVICSVVFHNRFDYNDKNFLNLMEKLNENFEILNSPWLQVCNVIPAFLDYLPGSHNKALKNFAEIKSYILKRVKEHQETLDMNNPRDFIDCFLIKMEKEKDNPHSEFTTESLMATVADVFVAGSETTSTTLRYGLLLLLKHKEVTAKVQKEIDHVIGRDRSPCMQDRTRMPYTDAMVHEVQRYVNLIPNNVPHAATCNVKFRNYVIPKGTDLITSLTSVLHDDKEFPNPKIFDPAHFLDENGNFKKSDYFMPFSIGKRMCMGEALARMELFLLLTTILQNFDLKSLADTKDIDTTPVASTFGCVPPSYQLYFIPR.

Serine 127 carries the phosphoserine modification. 2 positions are modified to N6-acetyllysine: lysine 249 and lysine 375. Cysteine 435 contributes to the heme binding site.

This sequence belongs to the cytochrome P450 family. Heme serves as cofactor. In terms of tissue distribution, liver.

The protein resides in the endoplasmic reticulum membrane. Its subcellular location is the microsome membrane. It carries out the reaction an organic molecule + reduced [NADPH--hemoprotein reductase] + O2 = an alcohol + oxidized [NADPH--hemoprotein reductase] + H2O + H(+). Functionally, catalyzes the N-demethylation of aminopyrine and benzphetamine, but does not catalyze the hydroxylation of tolbutamide, testosterone, and progesterone. The polypeptide is Cytochrome P450 2C28 (CYP2C28) (Mesocricetus auratus (Golden hamster)).